The chain runs to 199 residues: Recombination protein RecR (199 aa).

Residues 58-73 (CRICYNITDTEVCNIC) form a C4-type zinc finger. The Toprim domain occupies 81-176 (SLICVVSHPM…KVTRIAHGVP (96 aa)).

This sequence belongs to the RecR family.

May play a role in DNA repair. It seems to be involved in an RecBC-independent recombinational process of DNA repair. It may act with RecF and RecO. This chain is Recombination protein RecR, found in Thermoanaerobacter pseudethanolicus (strain ATCC 33223 / 39E) (Clostridium thermohydrosulfuricum).